The primary structure comprises 385 residues: Tryptophan--tRNA ligase (385 aa).

A 'HIGH' region motif is present at residues 82 to 90 (PSGPMHIGH). The 'KMSKS' region motif lies at 253–257 (KMSAS).

This sequence belongs to the class-I aminoacyl-tRNA synthetase family.

It is found in the cytoplasm. It carries out the reaction tRNA(Trp) + L-tryptophan + ATP = L-tryptophyl-tRNA(Trp) + AMP + diphosphate + H(+). The polypeptide is Tryptophan--tRNA ligase (Pyrococcus furiosus (strain ATCC 43587 / DSM 3638 / JCM 8422 / Vc1)).